Here is a 100-residue protein sequence, read N- to C-terminus: Large ribosomal subunit protein eL31 (100 aa).

This sequence belongs to the eukaryotic ribosomal protein eL31 family.

The protein is Large ribosomal subunit protein eL31 of Hyperthermus butylicus (strain DSM 5456 / JCM 9403 / PLM1-5).